The primary structure comprises 606 residues: NADH-ubiquinone oxidoreductase chain 5 (606 aa).

The next 15 helical transmembrane spans lie at 1–21 (MNMF…PIIM), 43–63 (AFMI…ETIF), 87–107 (MIFV…SMWY), 117–137 (FFKY…ANNM), 140–160 (LFIG…WWYG), 171–191 (AVLY…WFLL), 201–221 (IFIT…LAAT), 241–261 (TPVS…FLLI), 273–293 (IQTL…ICAL), 310–330 (LGLM…LHIC), 365–385 (VLPF…GMPF), 409–429 (LLIT…IMFF), 457–477 (LLIG…PTTI), 488–508 (MTAL…NLTT), and 582–602 (GLIK…LLIL).

It belongs to the complex I subunit 5 family. As to quaternary structure, core subunit of respiratory chain NADH dehydrogenase (Complex I) which is composed of 45 different subunits.

It is found in the mitochondrion inner membrane. The catalysed reaction is a ubiquinone + NADH + 5 H(+)(in) = a ubiquinol + NAD(+) + 4 H(+)(out). Functionally, core subunit of the mitochondrial membrane respiratory chain NADH dehydrogenase (Complex I) which catalyzes electron transfer from NADH through the respiratory chain, using ubiquinone as an electron acceptor. Essential for the catalytic activity and assembly of complex I. This chain is NADH-ubiquinone oxidoreductase chain 5 (MT-ND5), found in Canis lupus familiaris (Dog).